A 212-amino-acid polypeptide reads, in one-letter code: Ras-like protein (212 aa).

Position 15 to 22 (15 to 22) interacts with GTP; that stretch reads GGGGVGKS. An Effector region motif is present at residues 37–45; it reads YDPTIEDSY. Residues 62–66 and 121–124 each bind GTP; these read DTAGQ and NKCD. Residues cysteine 205 and cysteine 206 are each lipidated (S-palmitoyl cysteine). Cysteine 209 is subject to Cysteine methyl ester. Cysteine 209 carries the S-geranylgeranyl cysteine lipid modification. Positions 210-212 are cleaved as a propeptide — removed in mature form; the sequence is IVM.

The protein belongs to the small GTPase superfamily. Ras family.

The protein localises to the cell membrane. The enzyme catalyses GTP + H2O = GDP + phosphate + H(+). Its activity is regulated as follows. Alternates between an inactive form bound to GDP and an active form bound to GTP. Activated by a guanine nucleotide-exchange factor (GEF) and inactivated by a GTPase-activating protein (GAP). The protein is Ras-like protein (rasA) of Emericella nidulans (strain FGSC A4 / ATCC 38163 / CBS 112.46 / NRRL 194 / M139) (Aspergillus nidulans).